A 338-amino-acid polypeptide reads, in one-letter code: Glyceraldehyde-3-phosphate dehydrogenase 2 (338 aa).

Residues 11–12 (RI), D33, and R78 contribute to the NAD(+) site. D-glyceraldehyde 3-phosphate contacts are provided by residues 149–151 (SCT), T180, 209–210 (TG), and R232. C150 serves as the catalytic Nucleophile. N314 is a binding site for NAD(+).

Belongs to the glyceraldehyde-3-phosphate dehydrogenase family. In terms of assembly, homotetramer.

It localises to the cytoplasm. The catalysed reaction is D-glyceraldehyde 3-phosphate + phosphate + NAD(+) = (2R)-3-phospho-glyceroyl phosphate + NADH + H(+). The protein operates within carbohydrate degradation; glycolysis; pyruvate from D-glyceraldehyde 3-phosphate: step 1/5. The polypeptide is Glyceraldehyde-3-phosphate dehydrogenase 2 (gpd2) (Agaricus bisporus (White button mushroom)).